Consider the following 411-residue polypeptide: Tetra-peptide repeat homeobox protein 1 (411 aa).

Residues 3-24 constitute a DNA-binding region (homeobox); the sequence is SLREQQLQVWFKNRRAKLARER. Disordered stretches follow at residues 20–63, 88–246, 286–340, and 363–411; these read LARE…SGIL, IPAA…ISGP, PILS…SPDA, and LEGS…LLDL. Residues 27 to 55 show a composition bias toward low complexity; sequence QQQPQRVPGQRGRGARAAPLVPAASASAP. Pro residues-rich tracts occupy residues 95–139 and 149–246; these read GPGP…PGPI and FRGP…ISGP. Over residues 295 to 307 the composition is skewed to low complexity; sequence SPGSLPGLAPILG. A compositionally biased stretch (pro residues) spans 319-335; sequence APIPGPGSLPAPAPLWP. Composition is skewed to polar residues over residues 366 to 376 and 388 to 402; these read SSVSTMTSQYQ and GSQP…NENH.

This sequence belongs to the paired homeobox family.

It is found in the nucleus. Its function is as follows. Transcription factor expressed after fertilization required for zygotic genome activation (ZGA), a critical event in early embryonic development during which the developmental control passes from maternally provided mRNAs to the expression of the zygotic genome after fertilization. Binds and activates expression of key ZGA marker genes, such as NANOGNB, ZSCAN4, DUXB, KLF5 and DPPA3. Binds to regulatory DNA sequences containing a 5'-TAATCC-3' sequence motif. The sequence is that of Tetra-peptide repeat homeobox protein 1 from Homo sapiens (Human).